The primary structure comprises 378 residues: Succinyl-diaminopimelate desuccinylase (378 aa).

H67 provides a ligand contact to Zn(2+). Residue D69 is part of the active site. D100 provides a ligand contact to Zn(2+). The active-site Proton acceptor is the E134. 3 residues coordinate Zn(2+): E135, E163, and H349.

This sequence belongs to the peptidase M20A family. DapE subfamily. In terms of assembly, homodimer. Zn(2+) is required as a cofactor. Requires Co(2+) as cofactor.

It carries out the reaction N-succinyl-(2S,6S)-2,6-diaminopimelate + H2O = (2S,6S)-2,6-diaminopimelate + succinate. It participates in amino-acid biosynthesis; L-lysine biosynthesis via DAP pathway; LL-2,6-diaminopimelate from (S)-tetrahydrodipicolinate (succinylase route): step 3/3. Its function is as follows. Catalyzes the hydrolysis of N-succinyl-L,L-diaminopimelic acid (SDAP), forming succinate and LL-2,6-diaminopimelate (DAP), an intermediate involved in the bacterial biosynthesis of lysine and meso-diaminopimelic acid, an essential component of bacterial cell walls. This chain is Succinyl-diaminopimelate desuccinylase, found in Pasteurella multocida (strain Pm70).